A 475-amino-acid polypeptide reads, in one-letter code: Ubiquitin carboxyl-terminal hydrolase calypso (475 aa).

The region spanning 44–275 (GWLELESDPG…IRFNLMAVVP (232 aa)) is the UCH catalytic domain. The active-site Nucleophile is Cys130. His212 serves as the catalytic Proton donor. Residues 333 to 360 (AKDLQLLLKNLDTEIAINEQNLADENDR) are a coiled coil. Residues 374 to 402 (NYDKFICTFLSMLAHQGVLGELVSQHLLP) form the ULD domain. The interval 404–475 (KKVSGQSAAN…KGRNKCRKRK (72 aa)) is positively charged C-terminal tail required for binding nucleosomes. The segment at 411-475 (AANRISKQNS…KGRNKCRKRK (65 aa)) is disordered. Low complexity predominate over residues 419-460 (NSAASSAGANAGAAAGVTPKSQQQQQQPQTAASKNGKSPGKT). Basic residues predominate over residues 461–475 (PGRRRKGRNKCRKRK).

This sequence belongs to the peptidase C12 family. BAP1 subfamily. As to quaternary structure, catalytic component of the polycomb repressive deubiquitinase (PR-DUB) complex, at least composed of caly/calypso, Asx and sba (MBD5/6 homolog). The PR-DUB complex associates with nucleosomes to mediate deubiquitination of histone H2AK118ub1 substrates; the association requires the positively charged C-terminal tail of caly, probably due to direct binding of DNA. Interacts (via ULD domain) with Asx (via DEUBAD domain); the interaction produces a stable heterodimer with a composite binding site for ubiquitin. Homodimerizes (via coiled-coil hinge-region between the UCH and ULD domains) to mediate assembly of 2 copies of the caly-Asx heterodimer into a bisymmetric tetramer; dimerization enhances PR-DUB association with nucleosomes.

Its subcellular location is the nucleus. It carries out the reaction Thiol-dependent hydrolysis of ester, thioester, amide, peptide and isopeptide bonds formed by the C-terminal Gly of ubiquitin (a 76-residue protein attached to proteins as an intracellular targeting signal).. Its function is as follows. Catalytic component of the polycomb repressive deubiquitinase (PR-DUB) complex, a complex that specifically mediates deubiquitination of histone H2A monoubiquitinated at 'Lys-119' (H2AK118ub1). Mediates bisymmetric organization of the PR-DUB complex and is involved in association with nucleosomes to mediate deubiquitination. Does not deubiquitinate monoubiquitinated histone H2B. Required to maintain the transcriptionally repressive state of homeotic genes throughout development. The PR-DUB complex has weak or no activity toward 'Lys-48'- and 'Lys-63'-linked polyubiquitin chains. Polycomb group (PcG) protein. The polypeptide is Ubiquitin carboxyl-terminal hydrolase calypso (Drosophila persimilis (Fruit fly)).